The sequence spans 225 residues: Protein-L-isoaspartate O-methyltransferase (225 aa).

Ser75 is an active-site residue.

This sequence belongs to the methyltransferase superfamily. L-isoaspartyl/D-aspartyl protein methyltransferase family.

Its subcellular location is the cytoplasm. The catalysed reaction is [protein]-L-isoaspartate + S-adenosyl-L-methionine = [protein]-L-isoaspartate alpha-methyl ester + S-adenosyl-L-homocysteine. In terms of biological role, catalyzes the methyl esterification of L-isoaspartyl residues in peptides and proteins that result from spontaneous decomposition of normal L-aspartyl and L-asparaginyl residues. It plays a role in the repair and/or degradation of damaged proteins. The chain is Protein-L-isoaspartate O-methyltransferase from Stenotrophomonas maltophilia (strain K279a).